The chain runs to 434 residues: Mothers against decapentaplegic homolog 9 (434 aa).

Residues 16–140 (PAVKRLLGWK…YRRVETPVLP (125 aa)) enclose the MH1 domain. Residues cysteine 68, cysteine 113, cysteine 125, and histidine 130 each contribute to the Zn(2+) site. Residues 171–222 (MPHNATYPDSFQQSLGPAPPSSPGHVFPQSPCPTSYPQSPGSPSESDSPYQH) form a disordered region. Positions 202–221 (CPTSYPQSPGSPSESDSPYQ) are enriched in polar residues. Positions 236-434 (WCSVAYYELN…SPHNPISSVS (199 aa)) constitute an MH2 domain.

Belongs to the dwarfin/SMAD family. In terms of assembly, interaction with the co-SMAD SMAD4. Interacts with PEBP2-alpha subunit. Interacts with RANBP3L. In terms of processing, phosphorylated on serine by BMP (bone morphogenetic proteins) type 1 receptor kinase. Phosphorylated by activin type I receptor-like kinase-2 (ALK-2).

It is found in the cytoplasm. Its subcellular location is the nucleus. Its function is as follows. Transcriptional modulator activated by BMP (bone morphogenetic proteins) type 1 receptor kinase. SMAD9 is a receptor-regulated SMAD (R-SMAD). Has been shown to be activated by activin type I receptor-like kinase-2 (ALK-2) which stimulates heteromerization between SMAD9 and SMAD4. ALK-2 binds TGF-beta, activin and BMP. This is Mothers against decapentaplegic homolog 9 (Smad9) from Rattus norvegicus (Rat).